Reading from the N-terminus, the 720-residue chain is Cyclopenase penL (720 aa).

Residues H137, H141, and H313 each contribute to the Cu cation site.

The protein belongs to the tyrosinase family. Cu(2+) serves as cofactor.

It carries out the reaction (-)-cyclopenine = viridicatin + methyl isocyanate + H(+). The catalysed reaction is (-)-4'-methoxycyclopenine = 4'-methoxyviridicatin + methyl isocyanate + H(+). The protein operates within secondary metabolite biosynthesis. It participates in alkaloid biosynthesis. It functions in the pathway mycotoxin biosynthesis. In terms of biological role, cyclopenase; part of the gene cluster that mediates the biosynthesis of penigequinolones, potent insecticidal alkaloids that contain a highly modified 10-carbon prenyl group. The first stage is catalyzed by the nonribosomal peptide synthetase penN that condenses anthranilic acid and O-methyl-L-tyrosine to produce 4'-methoxycyclopeptin. 4'-methoxycyclopeptin is then converted to 4'-methoxydehydrocyclopeptin by the ketoglutarate-dependent dioxygenase penM through dehydrogenation to form a double bond between C-alpha and C-beta of the O-methyltyrosine side chain. PenM also converts its first product methoxydehydrocyclopeptin to 4'-methoxycyclopenin. The following conversion of 4'methoxycyclopenin into 4'-methoxyviridicatin is catalyzed by the cyclopenase penL. 4'-methoxyviridicatin is the precursor of quinolone natural products, and is further converted to quinolinone B. The prenyltransferase penI then catalyzes the canonical Friedel-Crafts alkylation of quinolinone B with dimethylallyl cation to yield dimethylallyl quinolone, which is subjected to FAD-dependent dehydrogenation by the FAD-linked oxidoreductase penH to yield conjugated aryl diene. The delta(3') double bond then serves as the site of the second alkylation with DMAPP catalyzed by the prenyltransferase penG to yield a carbenium ion intermediate, which can be attacked by H(2)O to yield a styrenyl quinolone containing a C3'-hydroxyprenyl chain, or undergo cyclization to yield yaequinolones J1 and J2. The conversion of the styrenyl quinolone into the tetrahydrofuran-containing yaequinolone C is performed by the FAD-dependent monooxygenase penE and involves epoxidation of the terminal C7'-C8' olefin, followed by epoxide ring opening initiated by the C3' hydroxyl group. The predicted cysteine hydrolase penJ acts as an epoxide hydrolase that enhances the rate of the 5-exo-tet cyclization step, increasing the yield of yaequinolone C. PenF catalyzes the cationic rearrangement of the epoxide formed by penE (before ring opening to produce yaequinolone C) into yaequinolone D. Finally, the short-chain dehydrogenase/reductase (SDR)-like reductase penD, catalyzes both the dehydration of yaequinolone D and the reduction of the resulting oxonium to yield penigequinolone. The polypeptide is Cyclopenase penL (Penicillium thymicola).